The sequence spans 446 residues: Argininosuccinate lyase (446 aa).

This sequence belongs to the lyase 1 family. Argininosuccinate lyase subfamily.

Its subcellular location is the cytoplasm. The enzyme catalyses 2-(N(omega)-L-arginino)succinate = fumarate + L-arginine. It participates in amino-acid biosynthesis; L-arginine biosynthesis; L-arginine from L-ornithine and carbamoyl phosphate: step 3/3. This Sulfurisphaera tokodaii (strain DSM 16993 / JCM 10545 / NBRC 100140 / 7) (Sulfolobus tokodaii) protein is Argininosuccinate lyase.